A 467-amino-acid chain; its full sequence is 6-phospho-beta-galactosidase (467 aa).

D-galactose 6-phosphate contacts are provided by Gln-19, His-116, Asn-159, Glu-160, and Asn-297. Residue Glu-160 is the Proton donor of the active site. Glu-375 functions as the Nucleophile in the catalytic mechanism. Ser-428, Trp-429, Lys-435, and Tyr-437 together coordinate D-galactose 6-phosphate.

It belongs to the glycosyl hydrolase 1 family.

It catalyses the reaction a 6-phospho-beta-D-galactoside + H2O = D-galactose 6-phosphate + an alcohol. It functions in the pathway carbohydrate metabolism; lactose degradation; D-galactose 6-phosphate and beta-D-glucose from lactose 6-phosphate: step 1/1. Inhibited by both galactose-6-phosphate and ATP. The polypeptide is 6-phospho-beta-galactosidase (Leptotrichia buccalis (strain ATCC 14201 / DSM 1135 / JCM 12969 / NCTC 10249 / C-1013-b)).